A 937-amino-acid polypeptide reads, in one-letter code: C-1-tetrahydrofolate synthase, cytoplasmic (937 aa).

Residues 1 to 309 (MALLLEGTSL…TLLPLKLQTP (309 aa)) form a methylenetetrahydrofolate dehydrogenase and cyclohydrolase region. Substrate is bound by residues 50–54 (YVRMK) and 97–99 (VQL). Residues 168 to 170 (GRS) and Ser-193 each bind NADP(+). 268–272 (PGSVG) contributes to the substrate binding site. Positions 310 to 937 (VPSDIEIARS…AENGDIVGLS (628 aa)) are formyltetrahydrofolate synthetase. 374-381 (TPFGEGKS) lines the ATP pocket.

It in the N-terminal section; belongs to the tetrahydrofolate dehydrogenase/cyclohydrolase family. The protein in the C-terminal section; belongs to the formate--tetrahydrofolate ligase family. As to quaternary structure, homodimer.

It is found in the cytoplasm. It catalyses the reaction (6R)-5,10-methylene-5,6,7,8-tetrahydrofolate + NADP(+) = (6R)-5,10-methenyltetrahydrofolate + NADPH. The enzyme catalyses (6R)-5,10-methenyltetrahydrofolate + H2O = (6R)-10-formyltetrahydrofolate + H(+). The catalysed reaction is (6S)-5,6,7,8-tetrahydrofolate + formate + ATP = (6R)-10-formyltetrahydrofolate + ADP + phosphate. Its pathway is one-carbon metabolism; tetrahydrofolate interconversion. In Schizosaccharomyces pombe (strain 972 / ATCC 24843) (Fission yeast), this protein is C-1-tetrahydrofolate synthase, cytoplasmic.